Reading from the N-terminus, the 390-residue chain is Precorrin-6Y C(5,15)-methyltransferase [decarboxylating] (390 aa).

This sequence belongs to the precorrin methyltransferase family.

It carries out the reaction precorrin-6B + 2 S-adenosyl-L-methionine = precorrin-8X + 2 S-adenosyl-L-homocysteine + CO2 + 3 H(+). The protein operates within cofactor biosynthesis; adenosylcobalamin biosynthesis; cob(II)yrinate a,c-diamide from precorrin-2 (aerobic route): step 7/10. Its function is as follows. Catalyzes the methylation of both C-5 and C-15 in precorrin-6Y to form precorrin-8X. This is Precorrin-6Y C(5,15)-methyltransferase [decarboxylating] (cobL) from Mycobacterium tuberculosis (strain ATCC 25618 / H37Rv).